The primary structure comprises 366 residues: Anhydro-N-acetylmuramic acid kinase (366 aa).

ATP is bound at residue 15-22 (GTSLDGVD).

It belongs to the anhydro-N-acetylmuramic acid kinase family.

It catalyses the reaction 1,6-anhydro-N-acetyl-beta-muramate + ATP + H2O = N-acetyl-D-muramate 6-phosphate + ADP + H(+). It functions in the pathway amino-sugar metabolism; 1,6-anhydro-N-acetylmuramate degradation. Its pathway is cell wall biogenesis; peptidoglycan recycling. Functionally, catalyzes the specific phosphorylation of 1,6-anhydro-N-acetylmuramic acid (anhMurNAc) with the simultaneous cleavage of the 1,6-anhydro ring, generating MurNAc-6-P. Is required for the utilization of anhMurNAc either imported from the medium or derived from its own cell wall murein, and thus plays a role in cell wall recycling. This chain is Anhydro-N-acetylmuramic acid kinase, found in Hydrogenovibrio crunogenus (strain DSM 25203 / XCL-2) (Thiomicrospira crunogena).